The following is a 524-amino-acid chain: Coatomer subunit delta-1 (524 aa).

Residues 215-244 (MDMDSFASKPKGGRPSAAATAPGKGLGMKL) are disordered. The 242-residue stretch at 283–524 (SDPVTVTIEE…RLVAANYQVV (242 aa)) folds into the MHD domain.

It belongs to the adaptor complexes medium subunit family. Delta-COP subfamily. Oligomeric complex that consists of at least the alpha, beta, beta', gamma, delta, epsilon and zeta subunits.

The protein localises to the cytoplasm. The protein resides in the golgi apparatus membrane. It localises to the cytoplasmic vesicle. Its subcellular location is the COPI-coated vesicle membrane. Functionally, the coatomer is a cytosolic protein complex that binds to dilysine motifs and reversibly associates with Golgi non-clathrin-coated vesicles, which further mediate biosynthetic protein transport from the ER, via the Golgi up to the trans Golgi network. Coatomer complex is required for budding from Golgi membranes, and is essential for the retrograde Golgi-to-ER transport of dilysine-tagged proteins. The protein is Coatomer subunit delta-1 of Oryza sativa subsp. japonica (Rice).